Consider the following 347-residue polypeptide: RNA 3'-terminal phosphate cyclase (347 aa).

Residues Gln101 and 286–289 (HMAD) contribute to the ATP site. His312 functions as the Tele-AMP-histidine intermediate in the catalytic mechanism.

Belongs to the RNA 3'-terminal cyclase family. Type 1 subfamily.

It localises to the cytoplasm. The enzyme catalyses a 3'-end 3'-phospho-ribonucleotide-RNA + ATP = a 3'-end 2',3'-cyclophospho-ribonucleotide-RNA + AMP + diphosphate. Catalyzes the conversion of 3'-phosphate to a 2',3'-cyclic phosphodiester at the end of RNA. The mechanism of action of the enzyme occurs in 3 steps: (A) adenylation of the enzyme by ATP; (B) transfer of adenylate to an RNA-N3'P to produce RNA-N3'PP5'A; (C) and attack of the adjacent 2'-hydroxyl on the 3'-phosphorus in the diester linkage to produce the cyclic end product. The biological role of this enzyme is unknown but it is likely to function in some aspects of cellular RNA processing. The chain is RNA 3'-terminal phosphate cyclase from Pyrobaculum neutrophilum (strain DSM 2338 / JCM 9278 / NBRC 100436 / V24Sta) (Thermoproteus neutrophilus).